The chain runs to 355 residues: Peptide chain release factor 1 (355 aa).

The residue at position 231 (Q231) is an N5-methylglutamine.

It belongs to the prokaryotic/mitochondrial release factor family. Post-translationally, methylated by PrmC. Methylation increases the termination efficiency of RF1.

The protein localises to the cytoplasm. Its function is as follows. Peptide chain release factor 1 directs the termination of translation in response to the peptide chain termination codons UAG and UAA. The protein is Peptide chain release factor 1 of Erythrobacter litoralis (strain HTCC2594).